The sequence spans 1102 residues: WASH complex subunit 4 (1102 aa).

This sequence belongs to the SWIP family. As to quaternary structure, component of the WASH complex.

Its subcellular location is the early endosome. Acts at least in part as component of the WASH complex which may regulate wash nucleation-promoting factor (NPF) activity and is required for its membrane targeting during endosomal sorting. During embryogenesis, not involved in the wash-dependent developmental migration of hemocytes anteriorly from the tail. The sequence is that of WASH complex subunit 4 from Drosophila melanogaster (Fruit fly).